The primary structure comprises 334 residues: NH(3)-dependent NAD(+) synthetase (334 aa).

47–54 (GLSGGIDS) contributes to the ATP binding site. Asp-53 is a binding site for Mg(2+). Arg-183 contacts deamido-NAD(+). Position 203 (Thr-203) interacts with ATP. Glu-208 lines the Mg(2+) pocket. Positions 216 and 223 each coordinate deamido-NAD(+). Lys-232 and Thr-254 together coordinate ATP.

The protein belongs to the NAD synthetase family. Homodimer.

The enzyme catalyses deamido-NAD(+) + NH4(+) + ATP = AMP + diphosphate + NAD(+) + H(+). It functions in the pathway cofactor biosynthesis; NAD(+) biosynthesis; NAD(+) from deamido-NAD(+) (ammonia route): step 1/1. In terms of biological role, catalyzes the ATP-dependent amidation of deamido-NAD to form NAD. Uses ammonia as a nitrogen source. In Rhizobium meliloti (strain 1021) (Ensifer meliloti), this protein is NH(3)-dependent NAD(+) synthetase.